The primary structure comprises 192 residues: MSGDLDRQYKLVVVGGGGVGKSALTIQFIQSHFVQDYDPTIEDSYRKQCVIDDKVAHLDILDTAGQEEFSAMRDEYMRTGEGFLLVFSVTDRSSFDEIPRFHTQILRVKDIEEFPMILVGNKSDLENERTVSTAEAQELGRKLKVSYLESSAKQRINVDAAFHDLVRAIRNANKASVEPLRKKEKSRRCIVL.

Residue 15 to 22 (GGGGVGKS) coordinates GTP. The Effector region signature appears at 37–45 (YDPTIEDSY). Residues 62 to 66 (DTAGQ) and 121 to 124 (NKSD) each bind GTP. Residue C189 is modified to Cysteine methyl ester. C189 is lipidated: S-geranylgeranyl cysteine. A propeptide spans 190–192 (IVL) (removed in mature form).

The protein belongs to the small GTPase superfamily. Ras family.

It localises to the cell membrane. The catalysed reaction is GTP + H2O = GDP + phosphate + H(+). Its activity is regulated as follows. Alternates between an inactive form bound to GDP and an active form bound to GTP. Activated by a guanine nucleotide-exchange factor (GEF) and inactivated by a GTPase-activating protein (GAP). Its function is as follows. Ras proteins bind GDP/GTP and possess intrinsic GTPase activity. The protein is Ras-like protein RAS2 (RAS2) of Hydra vulgaris (Hydra).